The primary structure comprises 261 residues: Class II histocompatibility antigen, M beta 1 chain (261 aa).

An N-terminal signal peptide occupies residues 1–18; it reads MAALWLLLLVLSLHCMGA. Positions 19 to 112 are beta-1; it reads GGFVAHVEST…PFWNALTHRT (94 aa). The Lumenal segment spans residues 19–218; the sequence is GGFVAHVEST…PGLSPIQTVK (200 aa). Intrachain disulfides connect Cys-29-Cys-97, Cys-43-Cys-53, and Cys-135-Cys-192. Residue Asn-75 is glycosylated (N-linked (GlcNAc...) asparagine). The beta-2 stretch occupies residues 113–207; it reads RPPSVRVAQT…GTSEPIRGDW (95 aa). Residues 114-204 form the Ig-like C1-type domain; the sequence is PPSVRVAQTT…QHSGTSEPIR (91 aa). Positions 208–218 are connecting peptide; that stretch reads TPGLSPIQTVK. The helical transmembrane segment at 219 to 239 threads the bilayer; sequence VSVSAATLGLGFIIFCVGFFR. Residues 240-261 are Cytoplasmic-facing; it reads WRKSHSSSYTPLSGSTYPEGRH. The YXXZ motif signature appears at 248-251; that stretch reads YTPL.

It belongs to the MHC class II family. Heterodimer of an alpha chain (DMA) and a beta chain (DMB). Interacts with MHCII; this interaction mediates rapid selection of high-affinity peptides.

The protein localises to the late endosome membrane. It localises to the lysosome membrane. Plays a critical role in catalyzing the release of class II-associated invariant chain peptide (CLIP) from newly synthesized MHC class II molecules and freeing the peptide binding site for acquisition of antigenic peptides. This Mus musculus (Mouse) protein is Class II histocompatibility antigen, M beta 1 chain (H2-DMb1).